Consider the following 203-residue polypeptide: MSKVIGITGGIATGKSTVSELLTAYGFKIVDADIASREAVKKGSKGLEQVKEIFGEEAIDENGEMNRQYVGEIVFNHPDLREALNEIVHPIVREIMEQEKNNYLEHGYHVIMDIPLLYENELQDTVDEVWVVYTSESIQIDRLMERNNLSLEDAKARVYSQISIDKKSRMANHVIDNLGDKLELKQNLQKLLEEEGYIQSESE.

In terms of domain architecture, DPCK spans Val-4–Glu-203. Ala-12–Thr-17 is a binding site for ATP.

It belongs to the CoaE family.

The protein localises to the cytoplasm. It carries out the reaction 3'-dephospho-CoA + ATP = ADP + CoA + H(+). Its pathway is cofactor biosynthesis; coenzyme A biosynthesis; CoA from (R)-pantothenate: step 5/5. Functionally, catalyzes the phosphorylation of the 3'-hydroxyl group of dephosphocoenzyme A to form coenzyme A. In Staphylococcus epidermidis (strain ATCC 12228 / FDA PCI 1200), this protein is Dephospho-CoA kinase.